The sequence spans 551 residues: MAAKEVKFGEAARAKMLNGVNILANAVKVTLGPKGRNVVLDKSWGAPRMTKDGVSVAKEIELEDKFENMGAQMVREVSSKTADVAGDGTTTATVLAQAIIREGMKAVAAGMNPMDLKRGIDLAVEAVVVGLKGISREVANSQEIAQVGAISANSDKVVGDMIAEAMDKVGKEGVITVEEAKGLETTLDVVEGMQFDRGYLSPYFVTNADKMLVQMENPLILLVEKKISNLQQILQILEGAVQSSRPLMIIAEDVEGEALATLVVNKLRGGLKVCAVKAPGFGDRRKAMMEDIATLTGGVLVSEDVGVKLENVTMDMLGMAKSIVVTKEDTTIIDGAGDHEAIKARVNQIRAQIEETSSDYDREKLQERLAKLAGGVAVIKVGGATEVEVKERKDRVDDALHATRAAVEEGIVPGGGVALLRAREASLTNLQGANHDQQVGINIVTRALEEPLRIIASNAGAEGSVVVNRVVETKETNFGFNAATGVYEDLVASGVIDPAKVVRHALQAAASVAGLMITTEAMVAELPKDEPAMPGGDMGGMGGMGGMGGMM.

Residues Thr-30–Pro-33, Lys-51, Asp-87–Thr-91, Gly-415, Asn-481–Ala-483, and Asp-497 contribute to the ATP site.

The protein belongs to the chaperonin (HSP60) family. As to quaternary structure, forms a cylinder of 14 subunits composed of two heptameric rings stacked back-to-back. Interacts with the co-chaperonin GroES.

The protein resides in the cytoplasm. It carries out the reaction ATP + H2O + a folded polypeptide = ADP + phosphate + an unfolded polypeptide.. Functionally, together with its co-chaperonin GroES, plays an essential role in assisting protein folding. The GroEL-GroES system forms a nano-cage that allows encapsulation of the non-native substrate proteins and provides a physical environment optimized to promote and accelerate protein folding. The sequence is that of Chaperonin GroEL from Magnetococcus marinus (strain ATCC BAA-1437 / JCM 17883 / MC-1).